The primary structure comprises 340 residues: MWVAVDAMSGDYGPEGIVEGAVLAVREFGLSVSLVGDEQELLDILLKFDYDTEKIRVIHSTEIIGMNDSPSIAVRAMEDSSVVKAVRLVADKECIGVFSPGNTGATMAAALLHLGRLPGVLRPPIAAPIPREEGPPVILLDAGANVDCKPEYLAQFAIMGEIYSRELFGVKNPKVGILSNGEEDKKGNTVSVKTFDLLKKIPFNFVGNVEGRDLYGSGRDVDVVVCDGFIGNIVLKATEGLAKSIFNVLRNSIRQSSLAQTGALLLKSTFTAVKKRLDYAEYGGALLLGVEGICMIGHGSSNALAVKNAVRVISECAKHQINERIRERLGEYKTILGDSN.

It belongs to the PlsX family. As to quaternary structure, homodimer. Probably interacts with PlsY.

It is found in the cytoplasm. The enzyme catalyses a fatty acyl-[ACP] + phosphate = an acyl phosphate + holo-[ACP]. It functions in the pathway lipid metabolism; phospholipid metabolism. Functionally, catalyzes the reversible formation of acyl-phosphate (acyl-PO(4)) from acyl-[acyl-carrier-protein] (acyl-ACP). This enzyme utilizes acyl-ACP as fatty acyl donor, but not acyl-CoA. This is Phosphate acyltransferase from Leptospira biflexa serovar Patoc (strain Patoc 1 / ATCC 23582 / Paris).